A 68-amino-acid polypeptide reads, in one-letter code: MGEISITKLLVVAALIILVFGTKKLRTLGGDLGSAIKGFKKAMNEDDDSAKKTTAEEEAPAQKLSHKE.

A helical transmembrane segment spans residues 1–21 (MGEISITKLLVVAALIILVFG). The interval 43-68 (MNEDDDSAKKTTAEEEAPAQKLSHKE) is disordered.

Belongs to the TatA/E family. TatE subfamily.

The protein resides in the cell inner membrane. Part of the twin-arginine translocation (Tat) system that transports large folded proteins containing a characteristic twin-arginine motif in their signal peptide across membranes. TatE shares overlapping functions with TatA. This Klebsiella pneumoniae subsp. pneumoniae (strain ATCC 700721 / MGH 78578) protein is Probable Sec-independent protein translocase protein TatE.